A 164-amino-acid chain; its full sequence is FMN reductase (NADH) RutF (164 aa).

This sequence belongs to the non-flavoprotein flavin reductase family. RutF subfamily.

The catalysed reaction is FMNH2 + NAD(+) = FMN + NADH + 2 H(+). In terms of biological role, catalyzes the reduction of FMN to FMNH2 which is used to reduce pyrimidine by RutA via the Rut pathway. The protein is FMN reductase (NADH) RutF of Escherichia coli O81 (strain ED1a).